Here is a 399-residue protein sequence, read N- to C-terminus: Dual specificity mitogen-activated protein kinase kinase 4 (399 aa).

Residues 1 to 40 (MAAPSPSGGGGSGGGSGSGTPGPVGSPAPGHPAVSSMQGK) form a disordered region. N-acetylalanine is present on Ala-2. The segment covering 7-22 (SGGGGSGGGSGSGTPG) has biased composition (gly residues). The segment at 37 to 52 (MQGKRKALKLNFANPP) is d domain. Arg-58 bears the Asymmetric dimethylarginine; alternate mark. Arg-58 bears the Omega-N-methylarginine; alternate mark. Ser-90 bears the Phosphoserine mark. Residues 102-367 (LKDLGEIGRG…YKELLKHPFI (266 aa)) form the Protein kinase domain. ATP contacts are provided by residues 108-116 (IGRGAYGSV) and Lys-131. The Proton acceptor role is filled by Asp-229. Ser-257 is subject to Phosphoserine; by MAP3K. At Thr-261 the chain carries Phosphothreonine; by MAP3K. The segment at 364–387 (HPFILMYEERAVEVACYVCKILDQ) is DVD domain.

The protein belongs to the protein kinase superfamily. STE Ser/Thr protein kinase family. MAP kinase kinase subfamily. Interacts with SPAG9. Interacts (via its D domain) with its substrates MAPK8/JNK1, MAPK9/JNK2, MAPK10/JNK3, MAPK11 and MAPK14. Interacts (via its DVD domain) with MAP3Ks activators like MAP3K1/MEKK1 and MAP3K11/MLK3. Interacts with ARRB1, ARRB2 and MAPK8IP3/JIP3. In terms of processing, activated by phosphorylation on Ser-257 and Thr-261 by MAP kinase kinase kinases (MAP3Ks). As to expression, abundant expression is seen in the skeletal muscle. It is also widely expressed in other tissues.

The protein localises to the cytoplasm. It localises to the nucleus. It carries out the reaction L-seryl-[protein] + ATP = O-phospho-L-seryl-[protein] + ADP + H(+). It catalyses the reaction L-threonyl-[protein] + ATP = O-phospho-L-threonyl-[protein] + ADP + H(+). The catalysed reaction is L-tyrosyl-[protein] + ATP = O-phospho-L-tyrosyl-[protein] + ADP + H(+). Its activity is regulated as follows. Activated in response to a variety of cellular stresses, including UV and gamma-irradiation, heat shock, hyperosmolarity, T-cell receptor stimulation, peroxide and inflammatory cytokines. Also activated by developmental cues. MAP2K4/MKK4 is activated by the majority of MKKKs, such as MAP3K5/ASK1, MAP3K1/MEKK1, MAP3K7/TAK1, MAP3K10/MLK2, MAP3K11/MLK3, MAP3K12/DLK and MAP3K13/LZK. Dual specificity protein kinase which acts as an essential component of the MAP kinase signal transduction pathway. Essential component of the stress-activated protein kinase/c-Jun N-terminal kinase (SAP/JNK) signaling pathway. With MAP2K7/MKK7, is the one of the only known kinase to directly activate the stress-activated protein kinase/c-Jun N-terminal kinases MAPK8/JNK1, MAPK9/JNK2 and MAPK10/JNK3. MAP2K4/MKK4 and MAP2K7/MKK7 both activate the JNKs by phosphorylation, but they differ in their preference for the phosphorylation site in the Thr-Pro-Tyr motif. MAP2K4 shows preference for phosphorylation of the Tyr residue and MAP2K7/MKK7 for the Thr residue. The phosphorylation of the Thr residue by MAP2K7/MKK7 seems to be the prerequisite for JNK activation at least in response to pro-inflammatory cytokines, while other stimuli activate both MAP2K4/MKK4 and MAP2K7/MKK7 which synergistically phosphorylate JNKs. MAP2K4 is required for maintaining peripheral lymphoid homeostasis. The MKK/JNK signaling pathway is also involved in mitochondrial death signaling pathway, including the release cytochrome c, leading to apoptosis. Whereas MAP2K7/MKK7 exclusively activates JNKs, MAP2K4/MKK4 additionally activates the p38 MAPKs MAPK11, MAPK12, MAPK13 and MAPK14. This Homo sapiens (Human) protein is Dual specificity mitogen-activated protein kinase kinase 4 (MAP2K4).